We begin with the raw amino-acid sequence, 279 residues long: UTP--glucose-1-phosphate uridylyltransferase (279 aa).

It belongs to the UDPGP type 2 family.

It catalyses the reaction alpha-D-glucose 1-phosphate + UTP + H(+) = UDP-alpha-D-glucose + diphosphate. In terms of biological role, may play a role in stationary phase survival. In Pseudomonas aeruginosa (strain ATCC 15692 / DSM 22644 / CIP 104116 / JCM 14847 / LMG 12228 / 1C / PRS 101 / PAO1), this protein is UTP--glucose-1-phosphate uridylyltransferase (galU).